Here is a 119-residue protein sequence, read N- to C-terminus: Large ribosomal subunit protein bL20 (119 aa).

The protein belongs to the bacterial ribosomal protein bL20 family.

Binds directly to 23S ribosomal RNA and is necessary for the in vitro assembly process of the 50S ribosomal subunit. It is not involved in the protein synthesizing functions of that subunit. The chain is Large ribosomal subunit protein bL20 from Xanthomonas oryzae pv. oryzae (strain KACC10331 / KXO85).